A 1844-amino-acid chain; its full sequence is MVGVLAMAAAAAPPPVKDCEIEPCKKRKKDDDTSTCKTITKYLSPLGKTRDRVFAPPKPSNILDYFRKTSPTNEKTQLGKECKIKSPESVPVDSNKDCTTPLEMFSNVEFKKKRKRVNLSHQLNNIKTENEAPIEISSDDSKEDYSLNNDFVESSTSVLRYKKQVEVLAENIQDTKSQPNTMTSLQNSKKVNPKQGTTKNDFKKLRKRKCRDVVDLSESLPLAEELNLLKKDGKDTKQMENTTSHANSRDNVTEAAQLNDSIITVSYEEFLKSHKENKVEEIPDSTMSICVPSETVDEIVKSGYISESENSEISQQVRFKTVTVLAQVHPIPPKKTGKIPRIFLKQKQFEMENSLSDPENEQTVQKRKSNVVIQEEELELAVLEAGSSEAVKPKCTLEERQQFMKAFRQPASDALKNGVKKSSDKQKDLNEKCLYEVGRDDNSKKIMENSGIQMVSKNGNLQLHTDKGSFLKEKNKKLKKKNKKTLDTGAIPGKNREGNTQKKETTFFLKEKQYQNRMSLRQRKTEFFKSSTLFNNESLVYEDIANDDLLKVSSLCNNNKLSRKTSIPVKDIKLTQSKAESEASLLNVSTPKSTRRSGRISSTPTTETIRGIDSDDVQDNSQLKASTQKAANLSEKHSLYTAELITVPFDSESPIRMKFTRISTPKKSKKKSNKRSEKSEATDGGFTSQIRKASNTSKNISKAKQLIEKAKALHISRSKVTEEIAIPLRRSSRHQTLPERKKLSETEDSVIIIDSSPTALKHPEKNQKKLQCLNDVLGKKLNTSTKNVPGKMKVAPLFLVRKAQKAADPVPSFDESSQDTSEKSQDCDVQCKAKRDFLMSGLPDLLKRQIAKKAAALDVYNAVSTSFQRVVHVQQKDDGCCLWHLKPPSCPLLTKFKELNTKVIDLSKCGIALGEFSTLNSKLKSGNSAAVFMRTRKEFTEEVRNLLLEEIRWSNPEFSLKKYFPLLLKKQIEHQVLSSECHSKQELEADVSHKETKRKLVEAENSKSKRKKPNEYSKNLEKTNRKSEELSKRNNSSGIKLDSSKDSGTEDMLWTEKYQPQTASELIGNELAIKKLHSWLKDWKRRAELEERQNLKGKRDEKHEDFSGGIDFKGSSDDEEESRLCNTVLITGPTGVGKTAAVYACAQELGFKIFEVNASSQRSGRQILSQLKEATQSHQVDKQGVNSQKPCFFNSYYIGKSPKKISSPKKVVTSPRKVPPPSPKSSGPKRALPPKTLANYFKVSPKPKNNEEIGMLLENNKGIKNSFEQKQITQTKSTNATNSNVKDVGAEEPSRKNATSLILFEEVDVIFDEDAGFLNAIKTFMATTKRPVILTTSDPTFSLMFDGCFEEIKFSTPSLLNVASYLQMICLTENFRTDVKDFVTLLTANTCDIRKSILYLQFWIRSGGGVLEERPLTLYRGNSRNVQLVCSEHGLDNKIYPKNTKKKRVDLPKCDSGCAETLFGLKNIFSPSEDLFSFLKHKITMKEEWHKFIQLLTEFQMRNVDFLYSNLEFILPLPVDTIPETKNFCGPSVTVDASAATKSMNCLARKHSEREQPLKKSQKKKQKKTLVILDDSDLFDTDLDFPDQSISLSSVSSSSNAEESKTGDEESKARDKGNNPETKKSIPCPPKTTAGKKCSALVSHCLNSLSEFMDNMSFLDALLTDVREQNKYGRNDFSWTNGKVTSGLCDEFSLESNDGWTSQSSGELKAAAEALSFTKCSSAISKALETLNSCKKLGRDPTNDLTFYVSQKRNNVYFSQSAANLDNAWKRISVIKSVFSSRSLLYVGNRQASIIEYLPTLRNICKTEKLKEQGKSKRRFLHYFEGIHLDIPKETVNTLAADFP.

Phosphoserine is present on Ser-44. A Glycyl lysine isopeptide (Lys-Gly) (interchain with G-Cter in SUMO2) cross-link involves residue Lys-127. Over residues 178-199 (QPNTMTSLQNSKKVNPKQGTTK) the composition is skewed to polar residues. The tract at residues 178–204 (QPNTMTSLQNSKKVNPKQGTTKNDFKK) is disordered. Ser-219, Ser-306, Ser-311, Ser-354, and Ser-369 each carry phosphoserine. Residues 368–384 (KSNVVIQEEELELAVLE) form an interaction with WDR48 region. Disordered regions lie at residues 477-499 (KLKKKNKKTLDTGAIPGKNREGN), 580-623 (ESEA…NSQL), and 658-700 (KFTR…SKNI). Composition is skewed to polar residues over residues 580–592 (ESEASLLNVSTPK) and 599–608 (RISSTPTTET). Phosphoserine is present on residues Ser-602, Ser-614, and Ser-621. The segment covering 664–673 (TPKKSKKKSN) has biased composition (basic residues). Positions 685 to 700 (GFTSQIRKASNTSKNI) are enriched in polar residues. Ser-817 bears the Phosphoserine mark. Composition is skewed to basic and acidic residues over residues 987-1032 (LEAD…ELSK) and 1092-1106 (RQNLKGKRDEKHEDF). 2 disordered regions span residues 987–1047 (LEAD…SKDS) and 1092–1118 (RQNLKGKRDEKHEDFSGGIDFKGSSDD). A Phosphoserine modification is found at Ser-1116. Position 1132 to 1139 (1132 to 1139 (GPTGVGKT)) interacts with ATP. 2 disordered regions span residues 1203–1235 (KKISSPKKVVTSPRKVPPPSPKSSGPKRALPPK) and 1272–1292 (ITQTKSTNATNSNVKDVGAEE). The span at 1272–1285 (ITQTKSTNATNSNV) shows a compositional bias: polar residues. The short motif at 1428–1432 (LVCSE) is the LXCXE motif element. Residues 1591–1635 (SLSSVSSSSNAEESKTGDEESKARDKGNNPETKKSIPCPPKTTAG) form a disordered region. Residues 1602–1624 (EESKTGDEESKARDKGNNPETKK) show a composition bias toward basic and acidic residues. The segment at 1630–1719 (PKTTAGKKCS…AAAEALSFTK (90 aa)) is interaction with RAD51 and RFC5.

Belongs to the AAA ATPase family. As to quaternary structure, component of a heteropentameric replication factor ATAD5 RFC-like complex composed of one large subunit (ATAD5) and four small subunits (RFC2, RFC3, RFC4 and RFC5). Within the ATAD5 RFC-like complex, interacts with RFC2, RFC4 and RFC5. Within the ATAD5 RFC-like complex, interacts directly via-N terminal with RAD51; the interactions is enhanced under replication stress. Interacts with RB1 predominantly in G1 phase via its LXCXE motif. Interacts with RAD9A in growing cells. The interaction with RAD9A is reduced after exposure to DNA replication-inhibiting agents. Interacts with BRD4. Interacts with PCNA. Interacts with deubiquitinating enzyme USP1, and its associated factor, WDR48. Post-translationally, ATR may stimulate the RAD9A dissociation.

The protein resides in the nucleus. Its function is as follows. Has an important role in DNA replication and in maintaining genome integrity during replication stress. Involved in a RAD9A-related damage checkpoint, a pathway that is important in determining whether DNA damage is compatible with cell survival or whether it requires cell elimination by apoptosis. Modulates the RAD9A interaction with BCL2 and thereby induces DNA damage-induced apoptosis. Promotes PCNA deubiquitination by recruiting the ubiquitin-specific protease 1 (USP1) and WDR48 thereby down-regulating the error-prone damage bypass pathway. As component of the ATAD5 RFC-like complex, regulates the function of the DNA polymerase processivity factor PCNA by unloading the ring-shaped PCNA homotrimer from DNA after replication during the S phase of the cell cycle. This seems to be dependent on its ATPase activity. Plays important roles in restarting stalled replication forks under replication stress, by unloading the PCNA homotrimer from DNA and recruiting RAD51 possibly through an ATR-dependent manner. Ultimately this enables replication fork regression, breakage, and eventual fork restart. Both the PCNA unloading activity and the interaction with WDR48 are required to efficiently recruit RAD51 to stalled replication forks. Promotes the generation of MUS81-mediated single-stranded DNA-associated breaks in response to replication stress, which is an alternative pathway to restart stalled/regressed replication forks. The protein is ATPase family AAA domain-containing protein 5 of Homo sapiens (Human).